A 497-amino-acid chain; its full sequence is Glycerol kinase (497 aa).

T12 is an ADP binding site. 3 residues coordinate ATP: T12, T13, and S14. T12 lines the sn-glycerol 3-phosphate pocket. Residue R16 coordinates ADP. Residues R82, E83, Y134, and D243 each coordinate sn-glycerol 3-phosphate. Glycerol-binding residues include R82, E83, Y134, D243, and Q244. T265 and G308 together coordinate ADP. ATP contacts are provided by T265, G308, Q312, and G409. 2 residues coordinate ADP: G409 and N413.

It belongs to the FGGY kinase family.

The catalysed reaction is glycerol + ATP = sn-glycerol 3-phosphate + ADP + H(+). It functions in the pathway polyol metabolism; glycerol degradation via glycerol kinase pathway; sn-glycerol 3-phosphate from glycerol: step 1/1. With respect to regulation, inhibited by fructose 1,6-bisphosphate (FBP). Key enzyme in the regulation of glycerol uptake and metabolism. Catalyzes the phosphorylation of glycerol to yield sn-glycerol 3-phosphate. This Nitratidesulfovibrio vulgaris (strain DSM 19637 / Miyazaki F) (Desulfovibrio vulgaris) protein is Glycerol kinase.